Consider the following 245-residue polypeptide: DNA repair protein RecO (245 aa).

Belongs to the RecO family.

Involved in DNA repair and RecF pathway recombination. This is DNA repair protein RecO from Pectobacterium atrosepticum (strain SCRI 1043 / ATCC BAA-672) (Erwinia carotovora subsp. atroseptica).